The following is a 220-amino-acid chain: RING-H2 finger protein ATL77 (220 aa).

Residues 53–73 (LMLLSILLCGIICSLGLHYII) form a helical membrane-spanning segment. The RING-type; atypical zinc finger occupies 130–172 (CVICLSDFVAGEQLRVLPKCNHGFHLRCIDKWLTQHMTCPKCR).

This sequence belongs to the RING-type zinc finger family. ATL subfamily.

It is found in the membrane. It catalyses the reaction S-ubiquitinyl-[E2 ubiquitin-conjugating enzyme]-L-cysteine + [acceptor protein]-L-lysine = [E2 ubiquitin-conjugating enzyme]-L-cysteine + N(6)-ubiquitinyl-[acceptor protein]-L-lysine.. It functions in the pathway protein modification; protein ubiquitination. This chain is RING-H2 finger protein ATL77 (ATL77), found in Arabidopsis thaliana (Mouse-ear cress).